The chain runs to 702 residues: Palmitoyltransferase AKR1 (702 aa).

Polar residues predominate over residues 1-40 (MSTDAELQTISGLSVASKSAPSTQTEGVTASGKVESTTNA). The disordered stretch occupies residues 1-51 (MSTDAELQTISGLSVASKSAPSTQTEGVTASGKVESTTNAEEATSDVEEEE). At 1–299 (MSTDAELQTI…TTNLLCFFTP (299 aa)) the chain is on the cytoplasmic side. 6 ANK repeats span residues 49-80 (EEENPLVVAARDGNTAEVKRLCESGSYSVLDT), 83-112 (DGVTALHWAAVNNRISTCQYLVEQGAVVDA), 117-147 (LNGTPLHWACRRGLVYIVHYLIQNGADPLRS), 150-179 (QGYNALHLATHSSNVMLLVYLLHQGLPVDC), 183-212 (NGRTALHWAAYQGDALSVDVLLRWGSDVKI), and 216-245 (QGFLPLHWGIVNGSRNSLARLIEEGSDMYA). The next 2 membrane-spanning stretches (helical) occupy residues 300-320 (FILILLGLVLCTFCGPIFGII) and 321-341 (LTVATLFGSIKLLKTLVLPSL). Residues 342–354 (YNGHAALLKSPFQ) are Cytoplasmic-facing. A helical transmembrane segment spans residues 355 to 375 (AGIFTGSAFWVTVKYLTSVLP). Residues 376–379 (ATFA) are Lumenal-facing. The helical transmembrane segment at 380–400 (SHPILNFFFASIFGLAMYCFF) threads the bilayer. Residues 401–479 (RCMSMDPGYI…WNAIGVRNHR (79 aa)) lie on the Cytoplasmic side of the membrane. The DHHC domain occupies 436–486 (HFCFVTYVRKPLRSKFCRQSKRVVARFDHFCPWVWNAIGVRNHRMFVLYVL). Cysteine 466 functions as the S-palmitoyl cysteine intermediate in the catalytic mechanism. A helical membrane pass occupies residues 480–500 (MFVLYVLFLQIGIPLWLALNS). Topologically, residues 501–518 (AYFGELLEIKRWDPLEFY) are lumenal. The chain crosses the membrane as a helical span at residues 519–539 (LVIWISLQLIWITFLSFVQIF). The Cytoplasmic portion of the chain corresponds to 540–702 (QICRSLTTSE…GEALLAESQV (163 aa)). The tract at residues 679-702 (PNQQQTNNRSTREDGEALLAESQV) is disordered.

The protein belongs to the DHHC palmitoyltransferase family. AKR/ZDHHC17 subfamily.

It is found in the early endosome membrane. The protein resides in the golgi apparatus membrane. The enzyme catalyses L-cysteinyl-[protein] + hexadecanoyl-CoA = S-hexadecanoyl-L-cysteinyl-[protein] + CoA. Functionally, palmitoyltransferase specific for casein kinase 1. This chain is Palmitoyltransferase AKR1 (AKR1), found in Yarrowia lipolytica (strain CLIB 122 / E 150) (Yeast).